The following is a 345-amino-acid chain: L-erythro-3,5-diaminohexanoate dehydrogenase (345 aa).

This sequence belongs to the KDD family. In terms of assembly, homodimer.

It carries out the reaction (3S,5S)-3,5-diaminohexanoate + NAD(+) + H2O = (5S)-5-amino-3-oxohexanoate + NH4(+) + NADH + H(+). It functions in the pathway amino-acid degradation; L-lysine degradation via acetate pathway. Functionally, involved in the anaerobic fermentation of lysine. Catalyzes the oxidative deamination of L-erythro-3,5-diaminohexanoate (3,5-DAH) to 3-keto-5-aminohexanoate (KAH). It can use NAD or NADP. The polypeptide is L-erythro-3,5-diaminohexanoate dehydrogenase (Fusobacterium nucleatum subsp. nucleatum (strain ATCC 25586 / DSM 15643 / BCRC 10681 / CIP 101130 / JCM 8532 / KCTC 2640 / LMG 13131 / VPI 4355)).